A 275-amino-acid chain; its full sequence is 2,3,4,5-tetrahydropyridine-2,6-dicarboxylate N-succinyltransferase (275 aa).

Belongs to the transferase hexapeptide repeat family.

The protein localises to the cytoplasm. The enzyme catalyses (S)-2,3,4,5-tetrahydrodipicolinate + succinyl-CoA + H2O = (S)-2-succinylamino-6-oxoheptanedioate + CoA. Its pathway is amino-acid biosynthesis; L-lysine biosynthesis via DAP pathway; LL-2,6-diaminopimelate from (S)-tetrahydrodipicolinate (succinylase route): step 1/3. This chain is 2,3,4,5-tetrahydropyridine-2,6-dicarboxylate N-succinyltransferase, found in Burkholderia multivorans (strain ATCC 17616 / 249).